The following is a 313-amino-acid chain: Leucine zipper protein 4 (313 aa).

The tract at residues 1–119 (MASFRKLTLS…PLIEQEKCSD (119 aa)) is interaction with DDX39B/UAP56. Disordered regions lie at residues 1-238 (MASF…QGDL) and 290-313 (QSGR…TITT). The UAP56-binding motif (UBM); required for proper nuclear localization motif lies at 22-40 (KVNFLDMSLDDIIIYKELE). Basic and acidic residues predominate over residues 34–60 (IIYKELEGTNAEEEKNKRQNHSKKESP). The segment at 51–80 (RQNHSKKESPSRQQSKAHRHRHRRGYSRCR) is arg-rich; required for RNA-binding. The span at 65–77 (SKAHRHRHRRGYS) shows a compositional bias: basic residues. Residues 81–92 (SNSEEGNHDKKP) are compositionally biased toward basic and acidic residues. The span at 126-141 (EKNQGQSEGNQHQSEG) shows a compositional bias: polar residues. Residues 142–168 (NPDKSEESQGQPEENHHSERSRNHLER) are compositionally biased toward basic and acidic residues. Residues 169–179 (SLSQSDRSQGQ) are compositionally biased toward polar residues. The tract at residues 178–236 (GQLKRHHPQYERSHGQYKRSHGQSERSHGHSERSHGHSERSHGHSERSHGHSKRSRSQG) is RS-containing His-rich (RS-H); necessary for nuclear localization. Residues 199–226 (GQSERSHGHSERSHGHSERSHGHSERSH) are compositionally biased toward basic and acidic residues. Ser-234 carries the post-translational modification Phosphoserine. A leucine-zipper; required for RNA-binding and for its relocalization to the cytoplasm during cell division region spans residues 238–287 (LVDTQSDLIATQRDLIATQKDLIATQRDLIATQRDLIVTQRDLVATERDL). An interaction with NXF1 region spans residues 241 to 313 (TQSDLIATQR…YSTGKNTITT (73 aa)). The segment covering 304-313 (YSTGKNTITT) has biased composition (polar residues).

Interacts with NXF1, NXF2, THOC1, THOC5, DDX39B/UAP56 and SRRT. Expressed specifically in testis. Also expressed in a wide variety of cancer types, but particularly high levels of expression observed in melanoma cells.

The protein localises to the nucleus. It localises to the cytoplasm. In terms of biological role, export adapter involved in mRNA nuclear export in cancer cells. Binds and enhances the RNA-binding activity of the nuclear RNA export factor NXF1. Can restore mRNA export function in cells compromised by loss of mRNA export adapters. This Homo sapiens (Human) protein is Leucine zipper protein 4 (LUZP4).